Reading from the N-terminus, the 921-residue chain is Isoleucine--tRNA ligase (921 aa).

The short motif at Pro57–His67 is the 'HIGH' region element. Residue Glu552 participates in L-isoleucyl-5'-AMP binding. The 'KMSKS' region motif lies at Lys593–Ser597. Lys596 lines the ATP pocket. Residues Cys888, Cys891, Cys908, and Cys911 each coordinate Zn(2+).

This sequence belongs to the class-I aminoacyl-tRNA synthetase family. IleS type 1 subfamily. Monomer. Zn(2+) serves as cofactor.

It localises to the cytoplasm. The catalysed reaction is tRNA(Ile) + L-isoleucine + ATP = L-isoleucyl-tRNA(Ile) + AMP + diphosphate. In terms of biological role, catalyzes the attachment of isoleucine to tRNA(Ile). As IleRS can inadvertently accommodate and process structurally similar amino acids such as valine, to avoid such errors it has two additional distinct tRNA(Ile)-dependent editing activities. One activity is designated as 'pretransfer' editing and involves the hydrolysis of activated Val-AMP. The other activity is designated 'posttransfer' editing and involves deacylation of mischarged Val-tRNA(Ile). The chain is Isoleucine--tRNA ligase from Bacillus cereus (strain B4264).